We begin with the raw amino-acid sequence, 267 residues long: MSYFESFILALIQGFTEFLPISSSAHLILPSAILGWEDQGLAFDVAVHVGTLAAVVLYFRKEVVSLLSAFFASIFKGDRSKEAKLAWLIVLATIPACLFGFVMKDIVELYLRSAWVIATTTIVFGLLLWYVDKHAELKADEYQADWKKALFIGLAQAVAIIPGTSRSGATITAALYLGFTREAAARFSFLMSIPIIVLAGSYLGLKLVTSGEPVHSGFLLTGIITSFISAYICIHFFLKLISRMGMTPFVIYRLVLGVGLFAFLLTQ.

8 helical membrane passes run 1-21 (MSYF…FLPI), 39-59 (QGLA…VLYF), 83-103 (AKLA…GFVM), 111-131 (LRSA…LWYV), 149-169 (ALFI…RSGA), 189-209 (FLMS…KLVT), 218-238 (FLLT…HFFL), and 245-265 (GMTP…AFLL).

It belongs to the UppP family.

The protein localises to the cell inner membrane. The enzyme catalyses di-trans,octa-cis-undecaprenyl diphosphate + H2O = di-trans,octa-cis-undecaprenyl phosphate + phosphate + H(+). Catalyzes the dephosphorylation of undecaprenyl diphosphate (UPP). Confers resistance to bacitracin. This chain is Undecaprenyl-diphosphatase, found in Vibrio cholerae serotype O1 (strain ATCC 39315 / El Tor Inaba N16961).